Reading from the N-terminus, the 254-residue chain is Alcohol dehydrogenase (254 aa).

10 to 33 (FVAGLGGIGLDTSREIVKSGPKNL) serves as a coordination point for NAD(+). Residue serine 138 coordinates substrate. Tyrosine 151 serves as the catalytic Proton acceptor.

This sequence belongs to the short-chain dehydrogenases/reductases (SDR) family. As to quaternary structure, homodimer.

It carries out the reaction a primary alcohol + NAD(+) = an aldehyde + NADH + H(+). It catalyses the reaction a secondary alcohol + NAD(+) = a ketone + NADH + H(+). The chain is Alcohol dehydrogenase (Adh) from Drosophila hawaiiensis (Fruit fly).